Consider the following 210-residue polypeptide: Rho-related GTP-binding protein RhoD (210 aa).

24–31 contacts GTP; it reads GDGGCGKT. The Effector region motif lies at 46 to 54; sequence YSPTVFERY. GTP-binding positions include 71–75 and 129–132; these read DTAGQ and CKID. A Cysteine methyl ester modification is found at C207. C207 carries S-geranylgeranyl cysteine lipidation. A propeptide spans 208 to 210 (removed in mature form); sequence LAT.

It belongs to the small GTPase superfamily. Rho family. Interacts with PAK5. Interacts (in GTP-bound form) with DAPK3, FILIP1 and WHAMM. Interacts (independent of GTP-loaded status) with ANKFY1. In terms of tissue distribution, widely expressed.

The protein resides in the cell membrane. It localises to the early endosome. Functionally, involved in endosome dynamics. May coordinate membrane transport with the function of the cytoskeleton. Involved in the internalization and trafficking of activated tyrosine kinase receptors such as PDGFRB. Participates in the reorganization of actin cytoskeleton; the function seems to involve WHAMM and includes regulation of filopodia formation and actin filament bundling. Can modulate the effect of DAPK3 in reorganization of actin cytoskeleton and focal adhesion dissolution. This is Rho-related GTP-binding protein RhoD (Rhod) from Mus musculus (Mouse).